The following is a 138-amino-acid chain: Basic phospholipase A2 canebraxin B (138 aa).

An N-terminal signal peptide occupies residues 1–16 (MRALWIVAVLLVAVEG). 7 cysteine pairs are disulfide-bonded: Cys42–Cys131, Cys44–Cys60, Cys59–Cys111, Cys65–Cys138, Cys66–Cys104, Cys73–Cys97, and Cys91–Cys102. The Ca(2+) site is built by Tyr43, Gly45, and Gly47. The active site involves His63. Asp64 contacts Ca(2+). Asp105 is a catalytic residue.

This sequence belongs to the phospholipase A2 family. Group II subfamily. As to quaternary structure, heterodimer of an acidic subunit and a basic chain. The acidic subunit is non-toxic, without enzymatic activity and comprises 3 peptides that are cross-linked by 7 disulfide bridges. The basic subunit is toxic, has phospholipase A2 activity and is composed of a single chain. It depends on Ca(2+) as a cofactor. Expressed by the venom gland.

The protein localises to the secreted. The catalysed reaction is a 1,2-diacyl-sn-glycero-3-phosphocholine + H2O = a 1-acyl-sn-glycero-3-phosphocholine + a fatty acid + H(+). In terms of biological role, snake venom phospholipase A2 (PLA2) that shows presynaptic neurotoxicity. PLA2 catalyzes the calcium-dependent hydrolysis of the 2-acyl groups in 3-sn-phosphoglycerides. This chain is Basic phospholipase A2 canebraxin B, found in Crotalus horridus (Timber rattlesnake).